Consider the following 244-residue polypeptide: Venom nerve growth factor 3 (244 aa).

Residues 1 to 18 form the signal peptide; the sequence is MSMLCYTLIIAFLIGIWA. The propeptide occupies 19-125; the sequence is APKSEDNVPL…TLNRNIRAKR (107 aa). Over residues 47 to 66 the composition is skewed to basic and acidic residues; the sequence is GLKTSRNTDQRHPAPKKAED. Residues 47-67 form a disordered region; it reads GLKTSRNTDQRHPAPKKAEDQ. Disulfide bonds link C139–C205, C181–C233, and C193–C235.

This sequence belongs to the NGF-beta family. As to quaternary structure, homodimer; non-covalently linked. As to expression, expressed by the venom gland.

The protein resides in the secreted. In terms of biological role, nerve growth factor is important for the development and maintenance of the sympathetic and sensory nervous systems. It stimulates division and differentiation of sympathetic and embryonic sensory neurons as well as basal forebrain cholinergic neurons in the brain. Its relevance in the snake venom is not clear. However, it has been shown to inhibit metalloproteinase-dependent proteolysis of platelet glycoprotein Ib alpha, suggesting a metalloproteinase inhibition to prevent metalloprotease autodigestion and/or protection against prey proteases. Binds a lipid between the two protein chains in the homodimer. The lipid-bound form promotes histamine relase from mouse mast cells, contrary to the lipid-free form. This chain is Venom nerve growth factor 3, found in Notechis scutatus scutatus (Mainland tiger snake).